Consider the following 237-residue polypeptide: Ribosomal RNA small subunit methyltransferase G (237 aa).

S-adenosyl-L-methionine contacts are provided by residues Gly-78, Phe-83, 129-130 (AE), and Arg-148.

Belongs to the methyltransferase superfamily. RNA methyltransferase RsmG family.

The protein localises to the cytoplasm. Specifically methylates the N7 position of a guanine in 16S rRNA. The sequence is that of Ribosomal RNA small subunit methyltransferase G from Streptococcus equi subsp. equi (strain 4047).